Here is a 358-residue protein sequence, read N- to C-terminus: Fructose-bisphosphate aldolase class 2 (358 aa).

Residue serine 61 coordinates D-glyceraldehyde 3-phosphate. The active-site Proton donor is the aspartate 109. Zn(2+) contacts are provided by histidine 110, aspartate 144, glutamate 174, and histidine 226. Dihydroxyacetone phosphate is bound at residue glycine 227. Histidine 264 is a Zn(2+) binding site. Dihydroxyacetone phosphate is bound by residues 265–267 (GGS) and 286–289 (NIDT).

This sequence belongs to the class II fructose-bisphosphate aldolase family. Zn(2+) is required as a cofactor.

The enzyme catalyses beta-D-fructose 1,6-bisphosphate = D-glyceraldehyde 3-phosphate + dihydroxyacetone phosphate. It functions in the pathway carbohydrate degradation; glycolysis; D-glyceraldehyde 3-phosphate and glycerone phosphate from D-glucose: step 4/4. In terms of biological role, catalyzes the aldol condensation of dihydroxyacetone phosphate (DHAP or glycerone-phosphate) with glyceraldehyde 3-phosphate (G3P) to form fructose 1,6-bisphosphate (FBP) in gluconeogenesis and the reverse reaction in glycolysis. This chain is Fructose-bisphosphate aldolase class 2 (fbaA), found in Buchnera aphidicola subsp. Acyrthosiphon pisum (strain APS) (Acyrthosiphon pisum symbiotic bacterium).